Consider the following 299-residue polypeptide: GTP cyclohydrolase FolE2 (299 aa).

It belongs to the GTP cyclohydrolase IV family.

It carries out the reaction GTP + H2O = 7,8-dihydroneopterin 3'-triphosphate + formate + H(+). The protein operates within cofactor biosynthesis; 7,8-dihydroneopterin triphosphate biosynthesis; 7,8-dihydroneopterin triphosphate from GTP: step 1/1. Functionally, converts GTP to 7,8-dihydroneopterin triphosphate. This chain is GTP cyclohydrolase FolE2, found in Citrobacter koseri (strain ATCC BAA-895 / CDC 4225-83 / SGSC4696).